We begin with the raw amino-acid sequence, 103 residues long: Large ribosomal subunit protein uL24 (103 aa).

Residues Tyr70–Asn103 are disordered.

This sequence belongs to the universal ribosomal protein uL24 family. Part of the 50S ribosomal subunit.

Its function is as follows. One of two assembly initiator proteins, it binds directly to the 5'-end of the 23S rRNA, where it nucleates assembly of the 50S subunit. In terms of biological role, one of the proteins that surrounds the polypeptide exit tunnel on the outside of the subunit. This is Large ribosomal subunit protein uL24 from Lactiplantibacillus plantarum (strain ATCC BAA-793 / NCIMB 8826 / WCFS1) (Lactobacillus plantarum).